The chain runs to 196 residues: GTP cyclohydrolase 1 (196 aa).

3 residues coordinate Zn(2+): cysteine 86, histidine 89, and cysteine 158.

The protein belongs to the GTP cyclohydrolase I family. In terms of assembly, toroid-shaped homodecamer, composed of two pentamers of five dimers.

The enzyme catalyses GTP + H2O = 7,8-dihydroneopterin 3'-triphosphate + formate + H(+). Its pathway is cofactor biosynthesis; 7,8-dihydroneopterin triphosphate biosynthesis; 7,8-dihydroneopterin triphosphate from GTP: step 1/1. This chain is GTP cyclohydrolase 1, found in Clostridium botulinum (strain Langeland / NCTC 10281 / Type F).